The primary structure comprises 154 residues: uncharacterized protein (154 aa).

Disordered regions lie at residues 23 to 63 and 79 to 154; these read ERVG…VVLK and IKAA…DENE. Acidic residues predominate over residues 43-56; the sequence is PDEDGDHSDKEDEQ. Residue serine 50 is modified to Phosphoserine. Lysine 108 is subject to N6-acetyllysine. Serine 146 carries the phosphoserine modification.

This is an uncharacterized protein from Homo sapiens (Human).